The chain runs to 596 residues: F-box/WD repeat-containing protein 8 (596 aa).

N-acetylmethionine is present on M1. The interval 21-95 (QVLRRRRRLE…PDRDAAEPEP (75 aa)) is disordered. Positions 29 to 43 (LEAGERRPRRPEAGA) are enriched in basic and acidic residues. Low complexity predominate over residues 44 to 64 (RGEPASGYLGLAQGLLEGAGR). Basic and acidic residues predominate over residues 71-91 (GRTDRKDVSSRSRSPPDRDAA). Phosphoserine occurs at positions 82 and 84. The 47-residue stretch at 111 to 157 (PFFDVHLPYELAINIFQYLNRRELGLCAQVSKTWKVIAEDEVLWYRL) folds into the F-box domain. 8 WD repeats span residues 199–248 (AVSE…LESE), 257–297 (QPYV…FEHD), 298–338 (ARIQ…SEFE), 339–381 (VQKL…LHYV), 382–427 (YGQP…SKLG), 428–473 (NALG…SAHQ), 474–511 (LGVS…EVHS), and 512–559 (RHPV…AYEF).

In terms of assembly, component of the Cul7-RING(FBXW8) complex consisting of CUL7, RBX1, SKP1 and FBXW8; within the complex interacts with CUL7 and SKP1. Interacts with GLMN isoform 1. Interacts with OBSL1, CUL1, CUL2, CCT6B, PFDN5, CCT2, CCT3, CCT6A, CCT7, VBP1, CCDC8, ARF1, TRIP13, PDCD5 and GORASP1. Interacts with MAP4K1/HPK1 (when autophosphorylated). Associated component of the 3M complex. Interacts with POUF51 (when phosphorylated on 'Ser-347'). Post-translationally, phosphorylation at Ser-84 by mTORC2 promotes FBXW8 stabilization, allowing its translocation to the cytosol in response to insulin. In terms of tissue distribution, expressed in placenta and embryonic brain (at protein level).

It is found in the cytoplasm. Its subcellular location is the perinuclear region. It localises to the golgi apparatus. The protein resides in the cytosol. It participates in protein modification; protein ubiquitination. Functionally, substrate-recognition component of the Cul7-RING(FBXW8) ubiquitin ligase complex, which mediates the ubiquitination and subsequent proteasomal degradation of target proteins. The Cul7-RING(FBXW8) complex mediates ubiquitination and consequent degradation of GORASP1, acting as a component of the ubiquitin ligase pathway that regulates Golgi morphogenesis and dendrite patterning in brain. Mediates ubiquitination and degradation of IRS1 in a mTOR-dependent manner: the Cul7-RING(FBXW8) complex recognizes and binds IRS1 previously phosphorylated by S6 kinase (RPS6KB1 or RPS6KB2). The Cul7-RING(FBXW8) complex also mediates ubiquitination of MAP4K1/HPK1: recognizes and binds autophosphorylated MAP4K1/HPK1, leading to its degradation, thereby affecting cell proliferation and differentiation. The Cul7-RING(FBXW8) complex also mediates ubiquitination of phosphorylated cyclin-D1 (CCND1). The Cul7-RING(FBXW8) complex is however not a major regulator of CCND1 stability during the G1/S transition. Associated component of the 3M complex, suggesting that it mediates some of 3M complex functions. In Rattus norvegicus (Rat), this protein is F-box/WD repeat-containing protein 8 (Fbxw8).